A 236-amino-acid chain; its full sequence is MKTTGGSEEQKRRAGEKAVEYVNDGDIVGLGTGSTAAAAIDALGDAVAAGYDIHGVPTSFATRDRAIEAGIPLTRIEAVDHIDVAIDGSDEINNNLTLIKGGGAAHAREKVIDATADQFIVVADESKLVETLSEPVPVSTLPMAQKPVKHRLDSLGATTTLRSATMKDGPVITDNGNIVFDCAFGHIENAEALAKSLAEIPGTVAHGLFVNLADVACIGTENGTNVYHGDQDQGQN.

Residues 32–35 (TGST), 87–90 (DGSD), and 100–103 (KGGG) each bind substrate. The active-site Proton acceptor is E109. Residue K127 coordinates substrate.

The protein belongs to the ribose 5-phosphate isomerase family. In terms of assembly, homodimer.

It catalyses the reaction aldehydo-D-ribose 5-phosphate = D-ribulose 5-phosphate. It participates in carbohydrate degradation; pentose phosphate pathway; D-ribose 5-phosphate from D-ribulose 5-phosphate (non-oxidative stage): step 1/1. Catalyzes the reversible conversion of ribose-5-phosphate to ribulose 5-phosphate. This chain is Ribose-5-phosphate isomerase A, found in Haloquadratum walsbyi (strain DSM 16790 / HBSQ001).